Reading from the N-terminus, the 474-residue chain is 3-isopropylmalate dehydratase large subunit (474 aa).

3 residues coordinate [4Fe-4S] cluster: C350, C415, and C418.

This sequence belongs to the aconitase/IPM isomerase family. LeuC type 1 subfamily. Heterodimer of LeuC and LeuD. [4Fe-4S] cluster is required as a cofactor.

It catalyses the reaction (2R,3S)-3-isopropylmalate = (2S)-2-isopropylmalate. The protein operates within amino-acid biosynthesis; L-leucine biosynthesis; L-leucine from 3-methyl-2-oxobutanoate: step 2/4. Its function is as follows. Catalyzes the isomerization between 2-isopropylmalate and 3-isopropylmalate, via the formation of 2-isopropylmaleate. The protein is 3-isopropylmalate dehydratase large subunit of Phenylobacterium zucineum (strain HLK1).